A 258-amino-acid chain; its full sequence is Enterotoxin type D (258 aa).

Positions 1 to 25 are cleaved as a signal peptide; it reads MKKFNILIALLFFTSLVISPLNVKA. The Zn(2+) site is built by aspartate 212, histidine 248, histidine 250, and aspartate 252.

It belongs to the staphylococcal/streptococcal toxin family. As to quaternary structure, homodimer; zinc-dependent. Interacts with MHC class II molecules composed of alpha/HLA-DRA and beta/HLA-DRB1 chains. It depends on Zn(2+) as a cofactor.

The protein localises to the secreted. Its function is as follows. Staphylococcal enterotoxin that activates the host immune system by binding as unprocessed molecules to major histocompatibility (MHC) complex class II and T-cell receptor (TCR) molecules. In turn, this ternary complex activates a large number of T-lymphocytes initiating a systemic release of pro-inflammatory cytokines. In addition, induces B-cell proliferation and differentiation in the presence of T-cells. Causes also the intoxication staphylococcal food poisoning syndrome. In Staphylococcus aureus, this protein is Enterotoxin type D (entD).